The chain runs to 182 residues: Isopentenyl-diphosphate Delta-isomerase (182 aa).

Mn(2+) is bound by residues H25 and H32. One can recognise a Nudix hydrolase domain in the interval L30–M164. C67 is a catalytic residue. H69 provides a ligand contact to Mn(2+). A Mg(2+)-binding site is contributed by E87. Mn(2+)-binding residues include E114 and E116. E116 is an active-site residue.

It belongs to the IPP isomerase type 1 family. Homodimer. It depends on Mg(2+) as a cofactor. Requires Mn(2+) as cofactor.

The protein resides in the cytoplasm. It carries out the reaction isopentenyl diphosphate = dimethylallyl diphosphate. It functions in the pathway isoprenoid biosynthesis; dimethylallyl diphosphate biosynthesis; dimethylallyl diphosphate from isopentenyl diphosphate: step 1/1. Its function is as follows. Catalyzes the 1,3-allylic rearrangement of the homoallylic substrate isopentenyl (IPP) to its highly electrophilic allylic isomer, dimethylallyl diphosphate (DMAPP). The polypeptide is Isopentenyl-diphosphate Delta-isomerase (Escherichia coli O7:K1 (strain IAI39 / ExPEC)).